Reading from the N-terminus, the 379-residue chain is Probable purine permease 11 (379 aa).

Helical transmembrane passes span 43-63 (WVLV…SVLL), 76-96 (WMAT…LLLL), 114-134 (IVLI…LYSV), 144-164 (YSLI…FINA), 167-187 (FTAL…LIAL), 203-223 (IVGF…LSLM), 239-259 (VLEM…IGLF), 294-313 (VCSV…FSNV), 314-330 (ISTL…LVVF), and 334-354 (MSGV…SYVY).

This sequence belongs to the purine permeases (TC 2.A.7.14) family. As to quaternary structure, may form a complex with the potassium channel subunit KAT1.

The protein resides in the membrane. This Arabidopsis thaliana (Mouse-ear cress) protein is Probable purine permease 11 (PUP11).